The following is a 104-amino-acid chain: Met repressor (104 aa).

Belongs to the MetJ family. Homodimer.

The protein resides in the cytoplasm. In terms of biological role, this regulatory protein, when combined with SAM (S-adenosylmethionine) represses the expression of the methionine regulon and of enzymes involved in SAM synthesis. This is Met repressor from Shewanella oneidensis (strain ATCC 700550 / JCM 31522 / CIP 106686 / LMG 19005 / NCIMB 14063 / MR-1).